A 162-amino-acid chain; its full sequence is MGLETEKADVQLFMADDAYSHHSGVDYADPEKYVDSSHDRDPHQLNSHLKLGFEDLIAEPETTHSFDKVWICSHALFEISKYVMYKFLTVFLAIPLAFIAGILFATLSCLHIWILMPFVKTCLMVLPSVQTIWKSVTDVVIGPLCTSVGRSFSSVSMQLSHD.

Residues Met-1–Lys-86 lie on the Cytoplasmic side of the membrane. Tyr-19 bears the Phosphotyrosine; by SRC mark. 2 positions are modified to phosphoserine: Ser-20 and Ser-23. At Tyr-27 the chain carries Phosphotyrosine. The residue at position 36 (Ser-36) is a Phosphoserine. The helical intramembrane region spans Phe-87 to Leu-107. Residues Ser-108–Asp-162 lie on the Cytoplasmic side of the membrane.

Belongs to the caveolin family. Monomer or homodimer. Interacts with CAV1; the interaction forms a stable heterooligomeric complex that is required for targeting to lipid rafts and for caveolae formation. Tyrosine phosphorylated forms do not form heterooligomers with the Tyr-19-phosphorylated form existing as a monomer or dimer, and the Tyr-27-form as a monomer only. Interacts (tyrosine phosphorylated form) with the SH2 domain-containing proteins, RASA1, NCK1 and SRC. Interacts (tyrosine phosphorylated form) with INSR, the interaction (Tyr-27-phosphorylated form) is increased on insulin stimulation. Interacts (Tyr-19 phosphorylated form) with MAPK1 (phosphorylated form); the interaction, promoted by insulin, leads to nuclear location and MAPK1 activation. Interacts with STAT3; the interaction is increased on insulin-induced tyrosine phosphorylation leading to STAT activation. In terms of processing, phosphorylated on serine and tyrosine residues. CAV1 promotes phosphorylation on Ser-23 which then targets the complex to the plasma membrane, lipid rafts and caveolae. Phosphorylation on Ser-36 appears to modulate mitosis in endothelial cells. Phosphorylation on both Tyr-19 and Tyr-27 is required for insulin-induced 'Ser-727' phosphorylation of STAT3 and its activation. Phosphorylation on Tyr-19 is required for insulin-induced phosphorylation of MAPK1 and DNA binding of STAT3. Tyrosine phosphorylation is induced by both EGF and insulin.

It localises to the nucleus. It is found in the cytoplasm. The protein localises to the golgi apparatus membrane. The protein resides in the cell membrane. Its subcellular location is the membrane. It localises to the caveola. In terms of biological role, may act as a scaffolding protein within caveolar membranes. Interacts directly with G-protein alpha subunits and can functionally regulate their activity. Acts as an accessory protein in conjunction with CAV1 in targeting to lipid rafts and driving caveolae formation. The Ser-36 phosphorylated form has a role in modulating mitosis in endothelial cells. Positive regulator of cellular mitogenesis of the MAPK signaling pathway. Required for the insulin-stimulated nuclear translocation and activation of MAPK1 and STAT3, and the subsequent regulation of cell cycle progression. This Mus musculus (Mouse) protein is Caveolin-2 (Cav2).